The following is a 51-amino-acid chain: MARNKPLARKLRLAAAYKENRPVPIWVSVKTRLKVRRGFRLRHWRRTKLKV.

Belongs to the eukaryotic ribosomal protein eL39 family.

This is Large ribosomal subunit protein eL39 from Staphylothermus marinus (strain ATCC 43588 / DSM 3639 / JCM 9404 / F1).